A 192-amino-acid polypeptide reads, in one-letter code: uncharacterized protein (192 aa).

The chain crosses the membrane as a helical; Signal-anchor span at residues 7 to 29 (FIHSISGGSSLLSASEVFASAFF). The helical transmembrane segment at 51 to 67 (YFLCVLVSTFLNSLVII) threads the bilayer.

It localises to the membrane. This is an uncharacterized protein from Saccharomyces cerevisiae (strain ATCC 204508 / S288c) (Baker's yeast).